We begin with the raw amino-acid sequence, 45 residues long: Large ribosomal subunit protein bL34 (45 aa).

The protein belongs to the bacterial ribosomal protein bL34 family.

The protein is Large ribosomal subunit protein bL34 of Paenarthrobacter aurescens (strain TC1).